The following is a 576-amino-acid chain: MEVGRVKRVAGPVVQAVGLKASMYDLVLVGEEGLMSEVIGISGDKHIIQVYEDTSGIKPGEPVKETGGPLVAQLGPGILTQIYDGVQRPLPLLAEKSGDFISRGLFVDGVDHKKKWEFKPLVKKGDTVKPGQPIGEVQEQLLIKHKIMVPPKHKGGVVKEIYSGNFTVEETVCVLEDGSELTMLQKWPVRQARPVVRKLPPTIPLRTGQRVIDGFFPLAKGGTAAIPGGFGTGKTVMQQTLSKWSDVDIVIYVGCGERGNEMADLLHEFPELVDPRTNRPLLERSIVYANTSNMPVAAREASIYTGMTTAEYYRDMGYDVLMTADSTSRWAEAMRELASRLEEMPGEEGYPAYLAARLADFYERAGRAEVLAGGEGSVAVVGAVSPPGGDFTEPVTQNTLRIVKVFWALDSRLTQRRHFPSINWLDSYSLYEKDLESWYAENVAPDWNQLKRRAMAILQENAELEEIVMLVGSDALPEDQQLTLEVARMIINFWLAQSAFHPVDTFCPYKKQYDLLKAILTYRDYAFDALRRGVAVDQIKSVPSKDALAKLRMVEDYEPDLKKVMDQMKAEFEALK.

An ATP-binding site is contributed by 228–235 (GGFGTGKT).

This sequence belongs to the ATPase alpha/beta chains family. As to quaternary structure, has multiple subunits with at least A(3), B(3), C, D, E, F, H, I and proteolipid K(x).

It localises to the cell membrane. It carries out the reaction ATP + H2O + 4 H(+)(in) = ADP + phosphate + 5 H(+)(out). Component of the A-type ATP synthase that produces ATP from ADP in the presence of a proton gradient across the membrane. The A chain is the catalytic subunit. This chain is A-type ATP synthase subunit A, found in Methanothrix thermoacetophila (strain DSM 6194 / JCM 14653 / NBRC 101360 / PT) (Methanosaeta thermophila).